The chain runs to 374 residues: Speckle-type POZ protein (374 aa).

Residues 31-161 enclose the MATH domain; the sequence is KFSYMWTINN…DDKLTLFCEV (131 aa). The tract at residues 71–191 is required for nuclear localization; it reads VNPKGLDEES…PECRLADELG (121 aa). Residues 123–133 are important for binding substrate proteins; it reads YRFVQGKDWGF. The BTB domain maps to 173 to 297; the sequence is QNTMNMVKVP…MCEDALCSNL (125 aa). Important for homodimerization stretches follow at residues 186–217 and 297–355; these read LADE…HKAI and LSVE…AYRS.

This sequence belongs to the Tdpoz family. Interacts with GLI2 and GLI3. Homodimer and homooligomer. Heterodimer with SPOPL. Each dimer interacts with two CUL3 molecules. Part of cullin-RING-based BCR (BTB-CUL3-RBX1) E3 ubiquitin-protein ligase complexes that contain CUL3 and homodimeric SPOP, or the heterodimer formed by SPOP and SPOPL, plus a target protein, such as MACROH2A1, PDX1/IPF1, BMI1, BRMS1 and DAXX. Interacts with IRF1; this interaction mediates IRF1 proteasomal degradation. Interacts with HNF1A.

It localises to the nucleus. The protein resides in the nucleus speckle. It participates in protein modification; protein ubiquitination. In terms of biological role, component of a cullin-RING-based BCR (BTB-CUL3-RBX1) E3 ubiquitin-protein ligase complex that mediates the ubiquitination of target proteins, leading most often to their proteasomal degradation. In complex with CUL3, involved in ubiquitination and proteasomal degradation of BRMS1, DAXX, PDX1/IPF1, GLI2 and GLI3. In complex with CUL3, involved in ubiquitination of MACROH2A1 and BMI1; this does not lead to their proteasomal degradation. Inhibits transcriptional activation of PDX1/IPF1 targets, such as insulin, by promoting PDX1/IPF1 degradation. The cullin-RING-based BCR (BTB-CUL3-RBX1) E3 ubiquitin-protein ligase complex containing homodimeric SPOP has higher ubiquitin ligase activity than the complex that contains the heterodimer formed by SPOP and SPOPL. Involved in the regulation of bromodomain and extra-terminal motif (BET) proteins BRD2, BRD3, BRD4 stability.Plays an essential role for proper translation, but not for their degradation, of critical DNA replication licensing factors CDT1 and CDC6, thereby participating in DNA synthesis and cell proliferation. Regulates interferon regulatory factor 1/IRF1 proteasomal turnover by targeting S/T-rich degrons in IRF1. Involved in ubiquitination of BRDT and promotes its degradation, thereby regulates histone removal in early condensing spermatids prior to histone-to-protamine exchange. This is Speckle-type POZ protein (SPOP) from Bos taurus (Bovine).